Reading from the N-terminus, the 379-residue chain is MKILRKNHPLFKIINHSFIDLPTPSNISSWWNFGSLLGMCLMIQILTGLFLAMHYTSDTTTAFSSVAHICRDVNYGWLIRYLHANGASMFFICLFIHVGRGIYYGSYVLSETWNIGIILFFTTMATAFVGYVLPWGQMSFWGATVITNLLSAIPYIGSMLVEWIWGGFSVDKATLTRFFAFHFILPFIITAFVLVHLLFLHETGSNNPSGLNSNSDKIPFHPYYTIKDLLGILFLLMALMILALFFPDILGDPDNYTPANPLNTPAHIKPEWYFLFAYAILRSIPNKLGGVLALLLSILILMAFPLLNTSKQHGLIFRPITQIIYWILIANLLVLTWIGGQPVEYPFTMIGQIASITYFTIILILMPVSNTIENNIIKL.

The next 4 membrane-spanning stretches (helical) occupy residues 33–53, 77–98, 113–133, and 178–198; these read FGSLLGMCLMIQILTGLFLAM, WLIRYLHANGASMFFICLFIHV, WNIGIILFFTTMATAFVGYVL, and FFAFHFILPFIITAFVLVHLL. Residues His83 and His97 each coordinate heme b. Heme b is bound by residues His182 and His196. Residue His201 coordinates a ubiquinone. Helical transmembrane passes span 226 to 246, 288 to 308, 320 to 340, and 347 to 367; these read IKDLLGILFLLMALMILALFF, LGGVLALLLSILILMAFPLLN, ITQIIYWILIANLLVLTWIGG, and FTMIGQIASITYFTIILILMP.

Belongs to the cytochrome b family. The cytochrome bc1 complex contains 11 subunits: 3 respiratory subunits (MT-CYB, CYC1 and UQCRFS1), 2 core proteins (UQCRC1 and UQCRC2) and 6 low-molecular weight proteins (UQCRH/QCR6, UQCRB/QCR7, UQCRQ/QCR8, UQCR10/QCR9, UQCR11/QCR10 and a cleavage product of UQCRFS1). This cytochrome bc1 complex then forms a dimer. Heme b serves as cofactor.

It localises to the mitochondrion inner membrane. Functionally, component of the ubiquinol-cytochrome c reductase complex (complex III or cytochrome b-c1 complex) that is part of the mitochondrial respiratory chain. The b-c1 complex mediates electron transfer from ubiquinol to cytochrome c. Contributes to the generation of a proton gradient across the mitochondrial membrane that is then used for ATP synthesis. This chain is Cytochrome b (MT-CYB), found in Akodon dayi (Day's grass mouse).